Here is a 120-residue protein sequence, read N- to C-terminus: Protein VraC (120 aa).

This chain is Protein VraC, found in Staphylococcus epidermidis (strain ATCC 35984 / DSM 28319 / BCRC 17069 / CCUG 31568 / BM 3577 / RP62A).